We begin with the raw amino-acid sequence, 529 residues long: Peptide chain release factor 3 (529 aa).

The tr-type G domain maps to 11–280; sequence AKRRTFAIIS…GLVEWAPAPM (270 aa). Residues 20–27, 88–92, and 142–145 contribute to the GTP site; these read SHPDAGKT, DTPGH, and NKLD.

It belongs to the TRAFAC class translation factor GTPase superfamily. Classic translation factor GTPase family. PrfC subfamily.

It is found in the cytoplasm. Its function is as follows. Increases the formation of ribosomal termination complexes and stimulates activities of RF-1 and RF-2. It binds guanine nucleotides and has strong preference for UGA stop codons. It may interact directly with the ribosome. The stimulation of RF-1 and RF-2 is significantly reduced by GTP and GDP, but not by GMP. This chain is Peptide chain release factor 3, found in Shigella dysenteriae serotype 1 (strain Sd197).